We begin with the raw amino-acid sequence, 311 residues long: Methionyl-tRNA formyltransferase (311 aa).

Position 111 to 114 (111 to 114 (SLLP)) interacts with (6S)-5,6,7,8-tetrahydrofolate.

Belongs to the Fmt family.

The enzyme catalyses L-methionyl-tRNA(fMet) + (6R)-10-formyltetrahydrofolate = N-formyl-L-methionyl-tRNA(fMet) + (6S)-5,6,7,8-tetrahydrofolate + H(+). Its function is as follows. Attaches a formyl group to the free amino group of methionyl-tRNA(fMet). The formyl group appears to play a dual role in the initiator identity of N-formylmethionyl-tRNA by promoting its recognition by IF2 and preventing the misappropriation of this tRNA by the elongation apparatus. This chain is Methionyl-tRNA formyltransferase, found in Caldicellulosiruptor saccharolyticus (strain ATCC 43494 / DSM 8903 / Tp8T 6331).